Here is a 172-residue protein sequence, read N- to C-terminus: Ribosome maturation factor RimM (172 aa).

The PRC barrel domain maps to 96–169; the sequence is PDEFYDHQLE…AIEIDPPEGL (74 aa).

Belongs to the RimM family. Binds ribosomal protein uS19.

The protein resides in the cytoplasm. In terms of biological role, an accessory protein needed during the final step in the assembly of 30S ribosomal subunit, possibly for assembly of the head region. Essential for efficient processing of 16S rRNA. May be needed both before and after RbfA during the maturation of 16S rRNA. It has affinity for free ribosomal 30S subunits but not for 70S ribosomes. The protein is Ribosome maturation factor RimM of Mycolicibacterium vanbaalenii (strain DSM 7251 / JCM 13017 / BCRC 16820 / KCTC 9966 / NRRL B-24157 / PYR-1) (Mycobacterium vanbaalenii).